We begin with the raw amino-acid sequence, 442 residues long: MDNQNGRISIALLPFLAHGHISPFFELAKQLAKRNCNVFLCSTPINLSSIKDKDSSASIKLVELHLPSSPDLPPHYHTTNGLPSHLMLPLRNAFETAGPTFSEILKTLNPDLLIYDFNPSWAPEIASSHNIPAVYFLTTAAASSSIGLHAFKNPGEKYPFPDFYDNSNITPEPPSADNMKLLHDFIACFERSCDIILIKSFRELEGKYIDLLSTLSDKTLVPVGPLVQDPMGHNEDPKTEQIINWLDKRAESTVVFVCFGSEYFLSNEELEEVAIGLEISTVNFIWAVRLIEGEKKGILPEGFVQRVGDRGLVVEGWAPQARILGHSSTGGFVSHCGWSSIAESMKFGVPVIAMARHLDQPLNGKLAAEVGVGMEVVRDENGKYKREGIAEVIRKVVVEKSGEVIRRKARELSEKMKEKGEQEIDRALEELVQICKKKKDEQ.

The Proton acceptor role is filled by H20. H20 serves as a coordination point for an anthocyanidin. D116 acts as the Charge relay in catalysis. Residues T138, A318, Q320, H335, W338, S340, E343, D359, and Q360 each coordinate UDP-alpha-D-glucose.

The protein belongs to the UDP-glycosyltransferase family. Expressed at higher levels in roots than in leaves.

It carries out the reaction (20S)-ginsenoside F2 + UDP-alpha-D-glucose = (20S)-ginsenoside Rd + UDP + H(+). It catalyses the reaction (20S)-ginsenoside Rh2 + UDP-alpha-D-glucose = (20S)-ginsenoside Rg3 + UDP + H(+). The protein operates within secondary metabolite biosynthesis; terpenoid biosynthesis. Component of the dammarane-type triterpene saponins (e.g. PPD-type ginsenosides or panaxosides) biosynthetic pathway. Glycosyltransferase that catalyzes the conversion of ginsenoside Rh2 to ginsenoside Rg3. Triggers the biosynthesis of ginsenoside Rd from ginsenoside F2. This Panax ginseng (Korean ginseng) protein is UDP-glucosyltransferase 29.